Reading from the N-terminus, the 236-residue chain is Small ribosomal subunit protein uS2c (236 aa).

Belongs to the universal ribosomal protein uS2 family.

Its subcellular location is the plastid. This is Small ribosomal subunit protein uS2c (rps2) from Cuscuta exaltata (Tall dodder).